Here is a 234-residue protein sequence, read N- to C-terminus: uncharacterized protein (234 aa).

L-glutamine is bound at residue 68–70; sequence GES. Cysteine 101 functions as the Nucleophile in the catalytic mechanism. L-glutamine-binding positions include arginine 131 and 167 to 168; that span reads IR. Residues histidine 208 and glutamate 210 each act as charge relay system in the active site.

The protein belongs to the glutaminase PdxT/SNO family.

Its subcellular location is the cytoplasm. The catalysed reaction is L-glutamine + H2O = L-glutamate + NH4(+). This is an uncharacterized protein from Schizosaccharomyces pombe (strain 972 / ATCC 24843) (Fission yeast).